Here is a 387-residue protein sequence, read N- to C-terminus: 8-amino-7-oxononanoate synthase (387 aa).

Arg-19 lines the substrate pocket. 106-107 (GY) is a binding site for pyridoxal 5'-phosphate. His-131 contributes to the substrate binding site. Ser-177, His-205, and Thr-236 together coordinate pyridoxal 5'-phosphate. At Lys-239 the chain carries N6-(pyridoxal phosphate)lysine. Thr-353 contributes to the substrate binding site.

This sequence belongs to the class-II pyridoxal-phosphate-dependent aminotransferase family. BioF subfamily. Homodimer. The cofactor is pyridoxal 5'-phosphate.

It catalyses the reaction 6-carboxyhexanoyl-[ACP] + L-alanine + H(+) = (8S)-8-amino-7-oxononanoate + holo-[ACP] + CO2. It functions in the pathway cofactor biosynthesis; biotin biosynthesis. Its function is as follows. Catalyzes the decarboxylative condensation of pimeloyl-[acyl-carrier protein] and L-alanine to produce 8-amino-7-oxononanoate (AON), [acyl-carrier protein], and carbon dioxide. The polypeptide is 8-amino-7-oxononanoate synthase (Nitrosomonas europaea (strain ATCC 19718 / CIP 103999 / KCTC 2705 / NBRC 14298)).